A 336-amino-acid polypeptide reads, in one-letter code: 4-hydroxy-2-oxovalerate aldolase (336 aa).

In terms of domain architecture, Pyruvate carboxyltransferase spans isoleucine 5–methionine 255. Arginine 13–aspartate 14 contacts substrate. Aspartate 14 contacts Mn(2+). The Proton acceptor role is filled by histidine 17. The substrate site is built by serine 167 and histidine 194. Residues histidine 194 and histidine 196 each contribute to the Mn(2+) site. Tyrosine 285 contacts substrate.

Belongs to the 4-hydroxy-2-oxovalerate aldolase family.

It carries out the reaction (S)-4-hydroxy-2-oxopentanoate = acetaldehyde + pyruvate. The chain is 4-hydroxy-2-oxovalerate aldolase (mhpE) from Carboxydothermus hydrogenoformans (strain ATCC BAA-161 / DSM 6008 / Z-2901).